Here is a 942-residue protein sequence, read N- to C-terminus: ATP-dependent RNA helicase DDX42 (942 aa).

Residues 1 to 18 (MNWNKGGPGTKRGFGFGG) are compositionally biased toward gly residues. The disordered stretch occupies residues 1–114 (MNWNKGGPGT…KPIDSDSDDD (114 aa)). Lysine 5 is subject to N6-acetyllysine. At arginine 12 the chain carries Omega-N-methylarginine. Residues 35 to 52 (SHSAFGATSSSSGFGKSA) are compositionally biased toward low complexity. Serine 58 is subject to Phosphoserine. Acidic residues predominate over residues 70–84 (DEENAYFEDEEEDSS). Phosphoserine is present on residues serine 96, serine 104, serine 109, and serine 111. Residues 116–157 (LEAFMAEVEDQAARDMKRLEEKDKERKNVKGIRDDIEEEDDQ) are a coiled coil. The interval 182-203 (EYDSDGNPIAPTKKIIDPLPPI) is disordered. Position 185 is a phosphoserine (serine 185). The Q motif signature appears at 253-281 (SSFAHFGFDEQLMHQIRKSEYTQPTPIQC). Positions 284–459 (VPVALSGRDM…RDILIDPIRV (176 aa)) constitute a Helicase ATP-binding domain. 297–304 (AKTGSGKT) contributes to the ATP binding site. The DEAD box motif lies at 407–410 (DEAD). One can recognise a Helicase C-terminal domain in the interval 487 to 632 (WLTRRLVEFT…HVSKELLDLA (146 aa)). 2 stretches are compositionally biased toward polar residues: residues 737 to 760 (LNSV…TSAT) and 786 to 798 (GVNN…NSRE). Disordered regions lie at residues 737 to 762 (LNSV…ATKG) and 783 to 942 (GAQG…RWDS). Residues 738–833 (NSVPTNSAQQ…TGNRHSDSPR (96 aa)) form a necessary for interaction with TP53BP2 region. Serine 754 is subject to Phosphoserine. The span at 820-924 (SHGETGNRHS…KVDSKTDKTA (105 aa)) shows a compositional bias: basic and acidic residues. Lysine 899 participates in a covalent cross-link: Glycyl lysine isopeptide (Lys-Gly) (interchain with G-Cter in SUMO2).

Belongs to the DEAD box helicase family. DDX42 subfamily. In terms of assembly, transient component of the SF3B subcomplex of the 17S U2 SnRNP complex. Interacts (via the C-terminus) with TP53BP2; the interaction is not inhibitied by TP53BP2 ubiquitination and is independent of p53/TP53.

It localises to the cytoplasm. It is found in the nucleus. It catalyses the reaction ATP + H2O = ADP + phosphate + H(+). Functionally, ATP-dependent RNA helicase that binds to partially double-stranded RNAs (dsRNAs) in order to unwind RNA secondary structures. Unwinding is promoted in the presence of single-strand binding proteins. Also mediates RNA duplex formation thereby displacing the single-strand RNA binding protein. ATP and ADP modulate its activity: ATP binding and hydrolysis by DDX42 triggers RNA strand separation, whereas the ADP-bound form of the protein triggers annealing of complementary RNA strands. Required for assembly of the 17S U2 SnRNP complex of the spliceosome, a large ribonucleoprotein complex that removes introns from transcribed pre-mRNAs: DDX42 associates transiently with the SF3B subcomplex of the 17S U2 SnRNP complex and is released after fulfilling its role in the assembly of 17S U2 SnRNP. Involved in the survival of cells by interacting with TP53BP2 and thereby counteracting the apoptosis-stimulating activity of TP53BP2. Relocalizes TP53BP2 to the cytoplasm. This chain is ATP-dependent RNA helicase DDX42 (DDX42), found in Pongo abelii (Sumatran orangutan).